Consider the following 658-residue polypeptide: Methionine--tRNA ligase (658 aa).

A 'HIGH' region motif is present at residues 9-19 (PYANGKAHVGH). Positions 140, 143, 152, and 156 each coordinate Zn(2+). The 'KMSKS' region signature appears at 322 to 326 (TFSKS). Residue K325 participates in ATP binding. The tRNA-binding domain maps to 558 to 658 (DFQKLDIRIG…KEVEPGTRVC (101 aa)).

Belongs to the class-I aminoacyl-tRNA synthetase family. MetG type 1 subfamily. In terms of assembly, homodimer. It depends on Zn(2+) as a cofactor.

It localises to the cytoplasm. It catalyses the reaction tRNA(Met) + L-methionine + ATP = L-methionyl-tRNA(Met) + AMP + diphosphate. Functionally, is required not only for elongation of protein synthesis but also for the initiation of all mRNA translation through initiator tRNA(fMet) aminoacylation. This Archaeoglobus fulgidus (strain ATCC 49558 / DSM 4304 / JCM 9628 / NBRC 100126 / VC-16) protein is Methionine--tRNA ligase.